We begin with the raw amino-acid sequence, 419 residues long: Ras association domain-containing protein 8 (419 aa).

The 82-residue stretch at 1-82 folds into the Ras-associating domain; sequence MELKVWVDGV…VQLILRRTGP (82 aa). Ser-105 and Ser-129 each carry phosphoserine. Thr-131 bears the Phosphothreonine mark. A disordered region spans residues 372–399; the sequence is ASQADIETEAPFQSGSLKRPGSSRQLPS. Over residues 382-399 the composition is skewed to polar residues; it reads PFQSGSLKRPGSSRQLPS. Ser-387 is subject to Phosphoserine.

The chain is Ras association domain-containing protein 8 (Rassf8) from Mus musculus (Mouse).